Reading from the N-terminus, the 176-residue chain is Thiol-disulfide oxidoreductase ResA (176 aa).

The helical; Signal-anchor for type II membrane protein transmembrane segment at 11–30 (LSILAVISVALGYTFYSNFF) threads the bilayer. The 141-residue stretch at 36–176 (ARAGEQAVNF…EFMELIKPEA (141 aa)) folds into the Thioredoxin domain. Cysteines 74 and 77 form a disulfide.

Belongs to the thioredoxin family. ResA subfamily.

Its subcellular location is the cell membrane. The protein operates within protein modification; cytochrome c assembly. Functionally, thiol-disulfide oxidoreductase which is required in disulfide reduction during c-type cytochrome synthesis. May accept reducing equivalents from CcdA, leading to breakage of disulfide bonds in apocytochrome c; following this reduction heme can be covalently attached. This is Thiol-disulfide oxidoreductase ResA from Halalkalibacterium halodurans (strain ATCC BAA-125 / DSM 18197 / FERM 7344 / JCM 9153 / C-125) (Bacillus halodurans).